The primary structure comprises 515 residues: Sterol 14-alpha demethylase cyp51A (515 aa).

A helical transmembrane segment spans residues 7-29; the sequence is LTAYMAVAVLTAILLNVVYQLFF. Residues Asn-33 and Asn-269 are each glycosylated (N-linked (GlcNAc...) asparagine). Cys-454 provides a ligand contact to heme. An N-linked (GlcNAc...) asparagine glycan is attached at Asn-512.

The protein belongs to the cytochrome P450 family. It depends on heme as a cofactor.

The protein localises to the endoplasmic reticulum membrane. It catalyses the reaction a 14alpha-methyl steroid + 3 reduced [NADPH--hemoprotein reductase] + 3 O2 = a Delta(14) steroid + formate + 3 oxidized [NADPH--hemoprotein reductase] + 4 H2O + 4 H(+). The catalysed reaction is a 14alpha-methyl steroid + reduced [NADPH--hemoprotein reductase] + O2 = a 14alpha-hydroxymethyl steroid + oxidized [NADPH--hemoprotein reductase] + H2O + H(+). It carries out the reaction a 14alpha-hydroxymethyl steroid + reduced [NADPH--hemoprotein reductase] + O2 = a 14alpha-formyl steroid + oxidized [NADPH--hemoprotein reductase] + 2 H2O + H(+). The enzyme catalyses a 14alpha-formyl steroid + reduced [NADPH--hemoprotein reductase] + O2 = a Delta(14) steroid + formate + oxidized [NADPH--hemoprotein reductase] + H2O + 2 H(+). It catalyses the reaction lanosterol + 3 reduced [NADPH--hemoprotein reductase] + 3 O2 = 4,4-dimethyl-5alpha-cholesta-8,14,24-trien-3beta-ol + formate + 3 oxidized [NADPH--hemoprotein reductase] + 4 H2O + 4 H(+). The catalysed reaction is lanosterol + reduced [NADPH--hemoprotein reductase] + O2 = 32-hydroxylanosterol + oxidized [NADPH--hemoprotein reductase] + H2O + H(+). It carries out the reaction 32-hydroxylanosterol + reduced [NADPH--hemoprotein reductase] + O2 = 32-oxolanosterol + oxidized [NADPH--hemoprotein reductase] + 2 H2O + H(+). The enzyme catalyses 32-oxolanosterol + reduced [NADPH--hemoprotein reductase] + O2 = 4,4-dimethyl-5alpha-cholesta-8,14,24-trien-3beta-ol + formate + oxidized [NADPH--hemoprotein reductase] + H2O + 2 H(+). It catalyses the reaction eburicol + 3 reduced [NADPH--hemoprotein reductase] + 3 O2 = 14-demethyleburicol + formate + 3 oxidized [NADPH--hemoprotein reductase] + 4 H2O + 4 H(+). The catalysed reaction is eburicol + reduced [NADPH--hemoprotein reductase] + O2 = 32-hydroxyeburicol + oxidized [NADPH--hemoprotein reductase] + H2O + H(+). It carries out the reaction 32-hydroxyeburicol + reduced [NADPH--hemoprotein reductase] + O2 = 32-oxoeburicol + oxidized [NADPH--hemoprotein reductase] + 2 H2O + H(+). The enzyme catalyses 32-oxoeburicol + reduced [NADPH--hemoprotein reductase] + O2 = 14-demethyleburicol + formate + oxidized [NADPH--hemoprotein reductase] + H2O + 2 H(+). Its pathway is steroid metabolism; ergosterol biosynthesis. With respect to regulation, the sterol 14-alpha demethylase activity is inhibited by azole compounds. Activity is inhibited by the novel and long-acting fungicidal azole, PC1244. Sterol 14alpha-demethylase, encoded by cyp51A and cyp51B, that plays a critical role in the third module of ergosterol biosynthesis pathway, being ergosterol the major sterol component in fungal membranes that participates in a variety of functions. The third module or late pathway involves the ergosterol synthesis itself through consecutive reactions that mainly occur in the endoplasmic reticulum (ER) membrane. In filamentous fungi, during the initial step of this module, lanosterol (lanosta-8,24-dien-3beta-ol) can be metabolized to eburicol. Sterol 14alpha-demethylase catalyzes the three-step oxidative removal of the 14alpha-methyl group (C-32) of both these sterols in the form of formate, and converts eburicol and lanosterol to 14-demethyleburicol (4,4,24-trimethylergosta-8,14,24(28)-trienol) and 4,4-dimethyl-5alpha-cholesta-8,14,24-trien-3beta-ol, respectively, which are further metabolized by other enzymes in the pathway to ergosterol. Can also use substrates not intrinsic to fungi, such as 24,25-dihydrolanosterol (DHL), producing 4,4'-dimethyl-8,14-cholestadien-3-beta-ol, but at lower rates than the endogenous substrates. Functionally, as a target of azole drugs, plays a crucial role in azole susceptibility. The protein is Sterol 14-alpha demethylase cyp51A of Aspergillus fumigatus (strain ATCC MYA-4609 / CBS 101355 / FGSC A1100 / Af293) (Neosartorya fumigata).